A 181-amino-acid chain; its full sequence is ATP synthase subunit delta (181 aa).

This sequence belongs to the ATPase delta chain family. In terms of assembly, F-type ATPases have 2 components, F(1) - the catalytic core - and F(0) - the membrane proton channel. F(1) has five subunits: alpha(3), beta(3), gamma(1), delta(1), epsilon(1). F(0) has three main subunits: a(1), b(2) and c(10-14). The alpha and beta chains form an alternating ring which encloses part of the gamma chain. F(1) is attached to F(0) by a central stalk formed by the gamma and epsilon chains, while a peripheral stalk is formed by the delta and b chains.

Its subcellular location is the cell inner membrane. Its function is as follows. F(1)F(0) ATP synthase produces ATP from ADP in the presence of a proton or sodium gradient. F-type ATPases consist of two structural domains, F(1) containing the extramembraneous catalytic core and F(0) containing the membrane proton channel, linked together by a central stalk and a peripheral stalk. During catalysis, ATP synthesis in the catalytic domain of F(1) is coupled via a rotary mechanism of the central stalk subunits to proton translocation. This protein is part of the stalk that links CF(0) to CF(1). It either transmits conformational changes from CF(0) to CF(1) or is implicated in proton conduction. In Syntrophus aciditrophicus (strain SB), this protein is ATP synthase subunit delta.